An 802-amino-acid chain; its full sequence is Phenylalanine--tRNA ligase beta subunit (802 aa).

The tRNA-binding domain occupies 39–154 (AEGLSKLVVG…EDAVPGDSIF (116 aa)). The 76-residue stretch at 407 to 482 (TEPVQVSTSL…RIYGYEKLPT (76 aa)) folds into the B5 domain. The Mg(2+) site is built by aspartate 460, aspartate 466, glutamate 469, and glutamate 470. The FDX-ACB domain maps to 709 to 802 (TKFPAVSRDI…LTEKVEAEVR (94 aa)).

It belongs to the phenylalanyl-tRNA synthetase beta subunit family. Type 1 subfamily. Tetramer of two alpha and two beta subunits. Mg(2+) is required as a cofactor.

Its subcellular location is the cytoplasm. The catalysed reaction is tRNA(Phe) + L-phenylalanine + ATP = L-phenylalanyl-tRNA(Phe) + AMP + diphosphate + H(+). In Streptococcus thermophilus (strain CNRZ 1066), this protein is Phenylalanine--tRNA ligase beta subunit.